A 142-amino-acid chain; its full sequence is Large ribosomal subunit protein bL17 (142 aa).

This sequence belongs to the bacterial ribosomal protein bL17 family. In terms of assembly, part of the 50S ribosomal subunit. Contacts protein L32.

The sequence is that of Large ribosomal subunit protein bL17 from Chlamydia muridarum (strain MoPn / Nigg).